The following is a 352-amino-acid chain: Peptide chain release factor 1 (352 aa).

Glutamine 229 carries the post-translational modification N5-methylglutamine.

The protein belongs to the prokaryotic/mitochondrial release factor family. Methylated by PrmC. Methylation increases the termination efficiency of RF1.

It localises to the cytoplasm. Functionally, peptide chain release factor 1 directs the termination of translation in response to the peptide chain termination codons UAG and UAA. This chain is Peptide chain release factor 1, found in Gluconacetobacter diazotrophicus (strain ATCC 49037 / DSM 5601 / CCUG 37298 / CIP 103539 / LMG 7603 / PAl5).